A 423-amino-acid chain; its full sequence is Lysosomal acid phosphatase (423 aa).

The N-terminal stretch at 1–30 is a signal peptide; that stretch reads MAGRQSGWSQAALLQFLLGMCLMVMPPIQA. The Lumenal portion of the chain corresponds to 31 to 380; it reads RSLRFVTLLY…QLASDTADTE (350 aa). Catalysis depends on His42, which acts as the Nucleophile. Asn92, Asn133, Asn167, Asn177, Asn191, Asn197, and Asn267 each carry an N-linked (GlcNAc...) asparagine glycan. Intrachain disulfides connect Cys159-Cys370, Cys212-Cys310, and Cys345-Cys349. Residue Asp287 is the Proton donor of the active site. N-linked (GlcNAc...) asparagine glycans are attached at residues Asn322 and Asn331. Residues 381-401 traverse the membrane as a helical segment; it reads VIVALAVCGSILFLLIVLLLT. At 402 to 423 the chain is on the cytoplasmic side; sequence VLFRMQAQPPGYHHVADREDHA.

It belongs to the histidine acid phosphatase family. The membrane-bound form is converted to the soluble form by sequential proteolytic processing. First, the C-terminal cytoplasmic tail is removed. Cleavage by a lysosomal protease releases the soluble form in the lysosome lumen.

The protein localises to the lysosome membrane. It is found in the lysosome lumen. The enzyme catalyses a phosphate monoester + H2O = an alcohol + phosphate. The chain is Lysosomal acid phosphatase (Acp2) from Rattus norvegicus (Rat).